A 440-amino-acid polypeptide reads, in one-letter code: Xaa-Pro dipeptidase (440 aa).

Mn(2+) is bound by residues Asp244, Asp255, His335, Glu380, and Glu419.

The protein belongs to the peptidase M24B family. Bacterial-type prolidase subfamily. It depends on Mn(2+) as a cofactor.

The enzyme catalyses Xaa-L-Pro dipeptide + H2O = an L-alpha-amino acid + L-proline. In terms of biological role, splits dipeptides with a prolyl residue in the C-terminal position. This chain is Xaa-Pro dipeptidase, found in Shewanella pealeana (strain ATCC 700345 / ANG-SQ1).